The following is a 359-amino-acid chain: Dual-specificity RNA methyltransferase RlmN (359 aa).

The active-site Proton acceptor is Glu-98. One can recognise a Radical SAM core domain in the interval 104-329; it reads EPKRGTLCIS…LEHGLTATIR (226 aa). Cys-111 and Cys-340 are joined by a disulfide. Residues Cys-118, Cys-122, and Cys-125 each contribute to the [4Fe-4S] cluster site. S-adenosyl-L-methionine contacts are provided by residues 166-167, Ser-198, 220-222, and Asn-297; these read GE and SLH. The active-site S-methylcysteine intermediate is Cys-340.

This sequence belongs to the radical SAM superfamily. RlmN family. [4Fe-4S] cluster is required as a cofactor.

Its subcellular location is the cytoplasm. It carries out the reaction adenosine(2503) in 23S rRNA + 2 reduced [2Fe-2S]-[ferredoxin] + 2 S-adenosyl-L-methionine = 2-methyladenosine(2503) in 23S rRNA + 5'-deoxyadenosine + L-methionine + 2 oxidized [2Fe-2S]-[ferredoxin] + S-adenosyl-L-homocysteine. It catalyses the reaction adenosine(37) in tRNA + 2 reduced [2Fe-2S]-[ferredoxin] + 2 S-adenosyl-L-methionine = 2-methyladenosine(37) in tRNA + 5'-deoxyadenosine + L-methionine + 2 oxidized [2Fe-2S]-[ferredoxin] + S-adenosyl-L-homocysteine. Its function is as follows. Specifically methylates position 2 of adenine 2503 in 23S rRNA and position 2 of adenine 37 in tRNAs. m2A2503 modification seems to play a crucial role in the proofreading step occurring at the peptidyl transferase center and thus would serve to optimize ribosomal fidelity. The chain is Dual-specificity RNA methyltransferase RlmN from Halorhodospira halophila (strain DSM 244 / SL1) (Ectothiorhodospira halophila (strain DSM 244 / SL1)).